Here is a 285-residue protein sequence, read N- to C-terminus: Putative sugar uptake protein lin0444 (285 aa).

9 helical membrane-spanning segments follow: residues 2–21, 31–50, 55–77, 111–133, 146–168, 172–194, 207–229, 233–255, and 262–284; these read SIYLIALLPVLGWGFMPIIA, QLLGTSISALLFAFILFWIL, TVLSFIVSFVSGIFWSFGQLLQF, WQTVTAVIIGVVAVILILIGVVM, SVSFHVYGIVILSSFFLTLYVVT, FDVTGFSIILPQAIGMLTCAIGI, VTFNLMTGLSWSIANLGMFLATA, VATSFSISQACVIVATIGGILIF, and LEWTFILSGILLIMVGVVFLSLL.

It belongs to the GRP transporter (TC 2.A.7.5) family.

It localises to the cell membrane. The chain is Putative sugar uptake protein lin0444 from Listeria innocua serovar 6a (strain ATCC BAA-680 / CLIP 11262).